Reading from the N-terminus, the 360-residue chain is Phospho-N-acetylmuramoyl-pentapeptide-transferase (360 aa).

10 helical membrane-spanning segments follow: residues 26–46, 73–93, 97–117, 135–155, 168–188, 199–219, 236–256, 263–283, 288–308, and 338–358; these read AILG…ILIK, TMGG…WGDL, YVLV…IDDY, ALQS…STMV, IMPQ…VGAS, GLAI…AYLS, AGEL…FLWF, VFMG…IAIL, ILLV…ILQV, and VIVR…ATLK.

This sequence belongs to the glycosyltransferase 4 family. MraY subfamily. The cofactor is Mg(2+).

It is found in the cell inner membrane. It carries out the reaction UDP-N-acetyl-alpha-D-muramoyl-L-alanyl-gamma-D-glutamyl-meso-2,6-diaminopimeloyl-D-alanyl-D-alanine + di-trans,octa-cis-undecaprenyl phosphate = di-trans,octa-cis-undecaprenyl diphospho-N-acetyl-alpha-D-muramoyl-L-alanyl-D-glutamyl-meso-2,6-diaminopimeloyl-D-alanyl-D-alanine + UMP. It functions in the pathway cell wall biogenesis; peptidoglycan biosynthesis. Functionally, catalyzes the initial step of the lipid cycle reactions in the biosynthesis of the cell wall peptidoglycan: transfers peptidoglycan precursor phospho-MurNAc-pentapeptide from UDP-MurNAc-pentapeptide onto the lipid carrier undecaprenyl phosphate, yielding undecaprenyl-pyrophosphoryl-MurNAc-pentapeptide, known as lipid I. This is Phospho-N-acetylmuramoyl-pentapeptide-transferase from Shewanella frigidimarina (strain NCIMB 400).